A 298-amino-acid chain; its full sequence is uncharacterized protein (298 aa).

Belongs to the glycosyltransferase 2 family.

This is an uncharacterized protein from Mycoplasma genitalium (strain ATCC 33530 / DSM 19775 / NCTC 10195 / G37) (Mycoplasmoides genitalium).